A 406-amino-acid polypeptide reads, in one-letter code: Succinylornithine transaminase (406 aa).

N6-(pyridoxal phosphate)lysine is present on Lys252.

This sequence belongs to the class-III pyridoxal-phosphate-dependent aminotransferase family. AstC subfamily. Pyridoxal 5'-phosphate is required as a cofactor.

The enzyme catalyses N(2)-succinyl-L-ornithine + 2-oxoglutarate = N-succinyl-L-glutamate 5-semialdehyde + L-glutamate. It functions in the pathway amino-acid degradation; L-arginine degradation via AST pathway; L-glutamate and succinate from L-arginine: step 3/5. Functionally, catalyzes the transamination of N(2)-succinylornithine and alpha-ketoglutarate into N(2)-succinylglutamate semialdehyde and glutamate. Can also act as an acetylornithine aminotransferase. The polypeptide is Succinylornithine transaminase (Escherichia coli O127:H6 (strain E2348/69 / EPEC)).